A 580-amino-acid polypeptide reads, in one-letter code: Frizzled and smoothened-like protein K (580 aa).

Positions 1–18 are cleaved as a signal peptide; sequence MRVLFILFLFYFYTYTEA. Residues 19–236 lie on the Extracellular side of the membrane; it reads QQYYPIDPTG…QWDNIFDTSD (218 aa). The FZ domain maps to 25 to 154; that stretch reads DPTGKCEQYI…SSDYNLTTYG (130 aa). N52, N97, N149, N170, and N186 each carry an N-linked (GlcNAc...) asparagine glycan. The helical transmembrane segment at 237–257 threads the bilayer; that stretch reads AISLVSLLCSVYLFITYMVIN. Residues 258 to 264 lie on the Cytoplasmic side of the membrane; the sequence is PKRNKYD. A helical membrane pass occupies residues 265–285; the sequence is YFFSFFVLSIILMSIAGTIGF. At 286–308 the chain is on the extracellular side; it reads SVGGTRKLLCPEINRRGVYTDPA. A helical membrane pass occupies residues 309–329; that stretch reads VAAAGWIFQFAIINAILWFSI. At 330-349 the chain is on the cytoplasmic side; that stretch reads NSFELWFQIKFIKRKLHLIK. Residues 350 to 370 form a helical membrane-spanning segment; that stretch reads FYILAVLVISIALSVPLSAIG. The Extracellular portion of the chain corresponds to 371–391; sequence EFNAGLGNFVVWIESGKYQNW. The chain crosses the membrane as a helical span at residues 392–412; sequence FFWGPLGIVLTVGTTFIGLVI. Residues 413 to 434 are Cytoplasmic-facing; sequence WEIYKIVSSTNKSDFFKLQLKP. Residues 435–455 traverse the membrane as a helical segment; the sequence is LMNMLLIYLTFVYLFGYNFYI. The Extracellular segment spans residues 456-490; that stretch reads HNSLNGFYGSSEEFKNCIISTDGKDCRIQGPPYSS. The helical transmembrane segment at 491 to 511 threads the bilayer; that stretch reads ILMFVFCLRIYGVYCIALYGF. At 512 to 580 the chain is on the cytoplasmic side; that stretch reads SPKTRSIWSN…SMEPDEIILR (69 aa). Residues 514–519 carry the Lys-Thr-X-X-X-Trp motif, mediates interaction with the PDZ domain of Dvl family members motif; the sequence is KTRSIW. The segment at 542 to 580 is disordered; the sequence is TTKGGTSSTDIKMSTNNNSNMDSGGGKSSSMEPDEIILR. The segment covering 551-563 has biased composition (polar residues); the sequence is DIKMSTNNNSNMD.

It belongs to the G-protein coupled receptor Fz/Smo family.

Its subcellular location is the membrane. The protein is Frizzled and smoothened-like protein K (fslK) of Dictyostelium discoideum (Social amoeba).